The primary structure comprises 721 residues: Polyphosphate kinase (721 aa).

N47 serves as a coordination point for ATP. Mg(2+) is bound by residues R377 and R407. H437 functions as the Phosphohistidine intermediate in the catalytic mechanism. Positions 471, 567, and 595 each coordinate ATP.

Belongs to the polyphosphate kinase 1 (PPK1) family. Mg(2+) is required as a cofactor. An intermediate of this reaction is the autophosphorylated ppk in which a phosphate is covalently linked to a histidine residue through a N-P bond.

The enzyme catalyses [phosphate](n) + ATP = [phosphate](n+1) + ADP. In terms of biological role, catalyzes the reversible transfer of the terminal phosphate of ATP to form a long-chain polyphosphate (polyP). The polypeptide is Polyphosphate kinase (Exiguobacterium sp. (strain ATCC BAA-1283 / AT1b)).